Reading from the N-terminus, the 123-residue chain is Small ribosomal subunit protein uS12 (123 aa).

The tract at residues 1-28 (MPTIQQLIRKPREPKRVRSKSQHLESCP) is disordered. Aspartate 89 bears the 3-methylthioaspartic acid mark.

This sequence belongs to the universal ribosomal protein uS12 family. As to quaternary structure, part of the 30S ribosomal subunit. Contacts proteins S8 and S17. May interact with IF1 in the 30S initiation complex.

Its function is as follows. With S4 and S5 plays an important role in translational accuracy. Functionally, interacts with and stabilizes bases of the 16S rRNA that are involved in tRNA selection in the A site and with the mRNA backbone. Located at the interface of the 30S and 50S subunits, it traverses the body of the 30S subunit contacting proteins on the other side and probably holding the rRNA structure together. The combined cluster of proteins S8, S12 and S17 appears to hold together the shoulder and platform of the 30S subunit. The protein is Small ribosomal subunit protein uS12 of Cereibacter sphaeroides (strain ATCC 17029 / ATH 2.4.9) (Rhodobacter sphaeroides).